A 367-amino-acid polypeptide reads, in one-letter code: tRNA uridine(34) hydroxylase (367 aa).

The region spanning Glu-159–Ser-249 is the Rhodanese domain. Residue Cys-213 is the Cysteine persulfide intermediate of the active site.

The protein belongs to the TrhO family.

It carries out the reaction uridine(34) in tRNA + AH2 + O2 = 5-hydroxyuridine(34) in tRNA + A + H2O. Functionally, catalyzes oxygen-dependent 5-hydroxyuridine (ho5U) modification at position 34 in tRNAs. In Leptospira borgpetersenii serovar Hardjo-bovis (strain L550), this protein is tRNA uridine(34) hydroxylase.